Consider the following 155-residue polypeptide: Fibroblast growth factor 1 (155 aa).

A2 bears the N-acetylalanine mark. The propeptide occupies 2 to 15 (AEGETTTFRALTEK). Heparin is bound at residue N33. Positions 127–143 (KKNGSSKLGPRTHFGQK) are heparin-binding.

It belongs to the heparin-binding growth factors family. Monomer. Homodimer. Interacts with FGFR1, FGFR2, FGFR3 and FGFR4. Affinity between fibroblast growth factors (FGFs) and their receptors is increased by heparan sulfate glycosaminoglycans that function as coreceptors. Found in a complex with FGFBP1, FGF1 and FGF2. Interacts with FGFBP1. Part of a Cu(2+)-dependent multiprotein aggregate containing FGF1, S100A13 and SYT1. Interacts with SYT1. Interacts with S100A13. Interacts with LRRC59. Interacts with CSNKA, CSNKB and FIBP. While binding with LRRC59, CSNKA and FIBP seem mutually exclusive, CSNKB and FIBP may cooperatively interact with FGF1. Forms a ternary complex with FGFR1 and ITGAV:ITGB3 and induces the recruitment of PTPN11 to the complex. In terms of processing, in the nucleus, phosphorylated by PKC/PRKCD.

Its subcellular location is the secreted. The protein resides in the cytoplasm. It localises to the cell cortex. The protein localises to the cytosol. It is found in the nucleus. Plays an important role in the regulation of cell survival, cell division, angiogenesis, cell differentiation and cell migration. Functions as a potent mitogen in vitro. Acts as a ligand for FGFR1 and integrins. Binds to FGFR1 in the presence of heparin leading to FGFR1 dimerization and activation via sequential autophosphorylation on tyrosine residues which act as docking sites for interacting proteins, leading to the activation of several signaling cascades. Binds to integrin ITGAV:ITGB3. Its binding to integrin, subsequent ternary complex formation with integrin and FGFR1, and the recruitment of PTPN11 to the complex are essential for FGF1 signaling. Induces the phosphorylation and activation of FGFR1, FRS2, MAPK3/ERK1, MAPK1/ERK2 and AKT1. Can induce angiogenesis. The sequence is that of Fibroblast growth factor 1 (FGF1) from Ovis aries (Sheep).